Consider the following 392-residue polypeptide: Protein NolC (392 aa).

The region spanning 2-71 is the J domain; it reads KRDLYETLGV…RAAYDRYGHA (70 aa). Disordered regions lie at residues 103–142 and 157–244; these read RRDDGRRSSAPLLGRSRTRCGPSLQHGDHPRGGLFRQDGA and LGRE…TGLR. Positions 157 to 170 are enriched in basic and acidic residues; it reads LGREAGHQPEDLRH. Low complexity predominate over residues 171-185; that stretch reads LPGLRPYPRRPGLLL. Residues 186–203 are compositionally biased toward basic and acidic residues; sequence DRTHLPDLRRSRSDDHRS. Basic residues predominate over residues 227-241; sequence HRGRHAYPPLRRGRT.

This Rhizobium fredii (Sinorhizobium fredii) protein is Protein NolC (nolC).